The sequence spans 201 residues: B-cell CLL/lymphoma 7 protein family member A (201 aa).

Positions tyrosine 46–serine 201 are disordered. Residues proline 54 to glycine 71 show a composition bias toward basic and acidic residues. Composition is skewed to polar residues over residues glutamate 73–proline 83, serine 93–proline 114, and glutamine 133–glycine 142. Positions threonine 158–glycine 167 are enriched in basic and acidic residues. Positions aspartate 168–alanine 179 are enriched in polar residues. A compositionally biased stretch (basic and acidic residues) spans glycine 192 to serine 201.

This sequence belongs to the BCL7 family.

This chain is B-cell CLL/lymphoma 7 protein family member A (bcl7a), found in Danio rerio (Zebrafish).